Here is a 272-residue protein sequence, read N- to C-terminus: RNA exonuclease 4 (272 aa).

Positions 1–17 are enriched in low complexity; that stretch reads MTTTLSSNWKKLSSKLN. The segment at 1 to 33 is disordered; that stretch reads MTTTLSSNWKKLSSKLNQGSKVTKQPVKGKNGK. Residues 99–250 enclose the Exonuclease domain; it reads YLAMDCEFVG…EDARATMLLF (152 aa).

The protein belongs to the REXO4 family.

It localises to the nucleus. Exoribonuclease involved in ribosome biosynthesis. Involved in the processing of ITS1, the internal transcribed spacer localized between the 18S and 5.8S rRNAs. This chain is RNA exonuclease 4 (REX4), found in Debaryomyces hansenii (strain ATCC 36239 / CBS 767 / BCRC 21394 / JCM 1990 / NBRC 0083 / IGC 2968) (Yeast).